Consider the following 370-residue polypeptide: Chloromuconate cycloisomerase (370 aa).

The active-site Proton acceptor is the K165. Mn(2+)-binding residues include D194, E220, and D245. The Proton donor role is filled by E323.

This sequence belongs to the mandelate racemase/muconate lactonizing enzyme family. It depends on Mn(2+) as a cofactor.

The catalysed reaction is 2-[(2R)-2-chloro-2,5-dihydro-5-oxofuryl]acetate = 3-chloro-cis,cis-muconate + H(+). Its pathway is aromatic compound metabolism; 3-chlorocatechol degradation. In Delftia acidovorans (Pseudomonas acidovorans), this protein is Chloromuconate cycloisomerase (tfdD).